A 231-amino-acid chain; its full sequence is Putative carboxymethylenebutenolidase (231 aa).

Residues D169 and H200 contribute to the active site.

Belongs to the dienelactone hydrolase family.

The catalysed reaction is 2-(5-oxo-2,5-dihydrofuran-2-ylidene)acetate + H2O = 4-oxohex-2-enedioate + H(+). This is Putative carboxymethylenebutenolidase from Azospirillum brasilense.